The sequence spans 157 residues: Cyclic pyranopterin monophosphate synthase (157 aa).

Substrate is bound by residues methionine 74–histidine 76 and methionine 112–glutamate 113. The active site involves aspartate 127.

It belongs to the MoaC family. In terms of assembly, homohexamer; trimer of dimers.

It catalyses the reaction (8S)-3',8-cyclo-7,8-dihydroguanosine 5'-triphosphate = cyclic pyranopterin phosphate + diphosphate. The protein operates within cofactor biosynthesis; molybdopterin biosynthesis. In terms of biological role, catalyzes the conversion of (8S)-3',8-cyclo-7,8-dihydroguanosine 5'-triphosphate to cyclic pyranopterin monophosphate (cPMP). This chain is Cyclic pyranopterin monophosphate synthase, found in Campylobacter jejuni (strain RM1221).